The sequence spans 300 residues: GTPase Era (300 aa).

Residues 6–173 form the Era-type G domain; the sequence is KSGFLSIIGR…VDVLKEHLPE (168 aa). The interval 14 to 21 is G1; that stretch reads GRPNVGKS. 14-21 contributes to the GTP binding site; the sequence is GRPNVGKS. Residues 40 to 44 form a G2 region; it reads QTTRN. Residues 61 to 64 form a G3 region; it reads DTPG. Residues 61–65 and 123–126 each bind GTP; these read DTPGI and NKID. The tract at residues 123–126 is G4; the sequence is NKID. A G5 region spans residues 152–154; the sequence is ISA. The region spanning 204–281 is the KH type-2 domain; that stretch reads TKEEVPHSIA…YLELWIKVKK (78 aa).

It belongs to the TRAFAC class TrmE-Era-EngA-EngB-Septin-like GTPase superfamily. Era GTPase family. As to quaternary structure, monomer.

It localises to the cytoplasm. The protein resides in the cell membrane. Its function is as follows. An essential GTPase that binds both GDP and GTP, with rapid nucleotide exchange. Plays a role in 16S rRNA processing and 30S ribosomal subunit biogenesis and possibly also in cell cycle regulation and energy metabolism. The protein is GTPase Era of Oceanobacillus iheyensis (strain DSM 14371 / CIP 107618 / JCM 11309 / KCTC 3954 / HTE831).